The primary structure comprises 632 residues: 2-oxoacid:ferredoxin oxidoreductase subunit alpha (632 aa).

Residues 254–258 (YPITP) carry the YPITP motif motif. 2 residues coordinate substrate: Thr-257 and Arg-345.

In terms of assembly, heterodimer composed of an alpha and a beta subunit.

It catalyses the reaction a 2-oxocarboxylate + 2 oxidized [2Fe-2S]-[ferredoxin] + CoA = an acyl-CoA + 2 reduced [2Fe-2S]-[ferredoxin] + CO2 + H(+). Catalyzes the coenzyme A-dependent oxidative decarboxylation of different 2-oxoacids such as 2-oxoglutarate, pyruvate and 2-oxobutyrate to form their CoA derivatives. The protein is 2-oxoacid:ferredoxin oxidoreductase subunit alpha of Saccharolobus solfataricus (Sulfolobus solfataricus).